A 1286-amino-acid polypeptide reads, in one-letter code: DNA-directed RNA polymerase 147 kDa polypeptide (1286 aa).

It belongs to the poxviridae DNA-directed RNA polymerase 147 kDa subunit family. The DNA-dependent RNA polymerase used for intermediate and late genes expression consists of eight subunits Rpo30/OPG66, Rpo7/OPG90, Rpo22/OPG103, Rpo147/OPG105, Rpo18/OPG119, Rpo19/OPG131, Rpo132/OPG151 and Rpo35/OPG156. The same holoenzyme, with the addition of the transcription-specificity factor OPG109, is used for early gene expression.

The protein localises to the virion. It catalyses the reaction RNA(n) + a ribonucleoside 5'-triphosphate = RNA(n+1) + diphosphate. Part of the DNA-dependent RNA polymerase which catalyzes the transcription of viral DNA into RNA using the four ribonucleoside triphosphates as substrates. Responsible for the transcription of early, intermediate and late genes. DNA-dependent RNA polymerase associates with the early transcription factor (ETF), itself composed of OPG118 and OPG133, thereby allowing the early genes transcription. Late transcription, and probably also intermediate transcription, require newly synthesized RNA polymerase. The polypeptide is DNA-directed RNA polymerase 147 kDa polypeptide (OPG105) (Variola virus (isolate Human/India/Ind3/1967) (VARV)).